The sequence spans 858 residues: Bifunctional uridylyltransferase/uridylyl-removing enzyme (858 aa).

Residues 1–318 (MNPTDLHPIK…FPRPESDARA (318 aa)) are uridylyltransferase. Residues 319–674 (IDEEFRSLHG…VRPTEEGSGL (356 aa)) are uridylyl-removing. The HD domain maps to 437 to 559 (VDQHTLAVIR…VKDERHLNAL (123 aa)). 2 consecutive ACT domains span residues 675-756 (QIMV…LADV) and 789-858 (RLSV…LAGE).

It belongs to the GlnD family. Mg(2+) serves as cofactor.

The catalysed reaction is [protein-PII]-L-tyrosine + UTP = [protein-PII]-uridylyl-L-tyrosine + diphosphate. It catalyses the reaction [protein-PII]-uridylyl-L-tyrosine + H2O = [protein-PII]-L-tyrosine + UMP + H(+). Its activity is regulated as follows. Uridylyltransferase (UTase) activity is inhibited by glutamine, while glutamine activates uridylyl-removing (UR) activity. Its function is as follows. Modifies, by uridylylation and deuridylylation, the PII regulatory proteins (GlnB and homologs), in response to the nitrogen status of the cell that GlnD senses through the glutamine level. Under low glutamine levels, catalyzes the conversion of the PII proteins and UTP to PII-UMP and PPi, while under higher glutamine levels, GlnD hydrolyzes PII-UMP to PII and UMP (deuridylylation). Thus, controls uridylylation state and activity of the PII proteins, and plays an important role in the regulation of nitrogen assimilation and metabolism. The sequence is that of Bifunctional uridylyltransferase/uridylyl-removing enzyme from Bordetella avium (strain 197N).